Reading from the N-terminus, the 288-residue chain is Lipoyl synthase (288 aa).

Residues C39, C44, C50, C65, C69, C72, and S276 each contribute to the [4Fe-4S] cluster site. In terms of domain architecture, Radical SAM core spans W51–E265.

The protein belongs to the radical SAM superfamily. Lipoyl synthase family. It depends on [4Fe-4S] cluster as a cofactor.

It is found in the cytoplasm. It carries out the reaction [[Fe-S] cluster scaffold protein carrying a second [4Fe-4S](2+) cluster] + N(6)-octanoyl-L-lysyl-[protein] + 2 oxidized [2Fe-2S]-[ferredoxin] + 2 S-adenosyl-L-methionine + 4 H(+) = [[Fe-S] cluster scaffold protein] + N(6)-[(R)-dihydrolipoyl]-L-lysyl-[protein] + 4 Fe(3+) + 2 hydrogen sulfide + 2 5'-deoxyadenosine + 2 L-methionine + 2 reduced [2Fe-2S]-[ferredoxin]. It functions in the pathway protein modification; protein lipoylation via endogenous pathway; protein N(6)-(lipoyl)lysine from octanoyl-[acyl-carrier-protein]: step 2/2. Functionally, catalyzes the radical-mediated insertion of two sulfur atoms into the C-6 and C-8 positions of the octanoyl moiety bound to the lipoyl domains of lipoate-dependent enzymes, thereby converting the octanoylated domains into lipoylated derivatives. The polypeptide is Lipoyl synthase (Bacteroides fragilis (strain YCH46)).